Reading from the N-terminus, the 472-residue chain is 3-isopropylmalate dehydratase large subunit (472 aa).

Positions 353, 414, and 417 each coordinate [4Fe-4S] cluster.

This sequence belongs to the aconitase/IPM isomerase family. LeuC type 1 subfamily. In terms of assembly, heterodimer of LeuC and LeuD. [4Fe-4S] cluster serves as cofactor.

The enzyme catalyses (2R,3S)-3-isopropylmalate = (2S)-2-isopropylmalate. It participates in amino-acid biosynthesis; L-leucine biosynthesis; L-leucine from 3-methyl-2-oxobutanoate: step 2/4. Catalyzes the isomerization between 2-isopropylmalate and 3-isopropylmalate, via the formation of 2-isopropylmaleate. The protein is 3-isopropylmalate dehydratase large subunit of Acinetobacter baumannii (strain AB307-0294).